A 186-amino-acid polypeptide reads, in one-letter code: T-cell receptor-associated transmembrane adapter 1 (186 aa).

Residues M1 to C7 are Extracellular-facing. The chain crosses the membrane as a helical; Signal-anchor for type III membrane protein span at residues P8 to F28. Topologically, residues N29–N186 are cytoplasmic. S46 is subject to Phosphoserine. Y79 is modified (phosphotyrosine). Positions Y79–M82 are interaction with PIK3R1. Residues S116–L140 are disordered. The segment covering K118–N128 has biased composition (basic residues). Basic and acidic residues predominate over residues F131–L140.

As to quaternary structure, homodimer; disulfide-linked. Interacts with CD3Z. When phosphorylated, interacts with PIK3R1. Post-translationally, phosphorylated on tyrosines by LCK or FYN upon TCR activation. As to expression, strongly expressed in thymus, and to a lesser extent in spleen, lymph node and peripheral blood lymphocytes. Present in T-cells and NK cells, but not B-cells (at protein level).

It is found in the cell membrane. Functionally, stabilizes the TCR (T-cell antigen receptor)/CD3 complex at the surface of T-cells. In Homo sapiens (Human), this protein is T-cell receptor-associated transmembrane adapter 1 (TRAT1).